A 71-amino-acid chain; its full sequence is Brevinin-1SN2 (71 aa).

The first 22 residues, 1 to 22 (MFTMKKSLLLIFFLGTINLSLC), serve as a signal peptide directing secretion. The propeptide at 23–45 (EEERNADEDEKRDGDDESDVEVQ) is removed in mature form. Cysteines 65 and 71 form a disulfide.

The protein belongs to the frog skin active peptide (FSAP) family. Brevinin subfamily. Expressed by the skin glands.

The protein resides in the secreted. In terms of biological role, antimicrobial peptide. Active against a variety of Gram-negative and Gram-positive bacterial strains. Active against fungus C.glabrata 090902 and C.albicans ATCC 10231. Shows hemolytic activity against human erythrocytes. This chain is Brevinin-1SN2, found in Sylvirana spinulosa (Fine-spined frog).